A 61-amino-acid chain; its full sequence is Small ribosomal subunit protein uS14 (61 aa).

Zn(2+)-binding residues include Cys24, Cys27, Cys40, and Cys43.

This sequence belongs to the universal ribosomal protein uS14 family. Zinc-binding uS14 subfamily. Part of the 30S ribosomal subunit. Contacts proteins S3 and S10. The cofactor is Zn(2+).

Functionally, binds 16S rRNA, required for the assembly of 30S particles and may also be responsible for determining the conformation of the 16S rRNA at the A site. The chain is Small ribosomal subunit protein uS14 from Maridesulfovibrio salexigens (strain ATCC 14822 / DSM 2638 / NCIMB 8403 / VKM B-1763) (Desulfovibrio salexigens).